The following is a 65-amino-acid chain: UPF0434 protein Mpe_A2486 (65 aa).

Belongs to the UPF0434 family.

This is UPF0434 protein Mpe_A2486 from Methylibium petroleiphilum (strain ATCC BAA-1232 / LMG 22953 / PM1).